Consider the following 212-residue polypeptide: Adenylate kinase (212 aa).

Position 10–15 (G10–T15) interacts with ATP. The segment at S30–V59 is NMP. AMP contacts are provided by residues T31, R36, E57–V59, G86–R89, and Q93. The tract at residues G127–D159 is LID. Residues R128 and T137–F138 contribute to the ATP site. AMP-binding residues include R156 and R167. Q195 lines the ATP pocket.

The protein belongs to the adenylate kinase family. As to quaternary structure, monomer.

Its subcellular location is the cytoplasm. The catalysed reaction is AMP + ATP = 2 ADP. It participates in purine metabolism; AMP biosynthesis via salvage pathway; AMP from ADP: step 1/1. Catalyzes the reversible transfer of the terminal phosphate group between ATP and AMP. Plays an important role in cellular energy homeostasis and in adenine nucleotide metabolism. The sequence is that of Adenylate kinase from Streptococcus agalactiae serotype III (strain NEM316).